The sequence spans 96 residues: Neurotoxin beta-KTx 31.1 (96 aa).

Positions 1 to 21 are cleaved as a signal peptide; sequence MQAKRTILLLLLLGMVALSSC. Residues 22-29 constitute a propeptide that is removed on maturation; it reads GLREKHVQ. In terms of domain architecture, BetaSPN-type CS-alpha/beta spans 56–93; it reads QYGCPIIKDYCSFHCNDLEKHEGYCHGTKCKCNIPNQY. 3 cysteine pairs are disulfide-bonded: Cys59/Cys80, Cys66/Cys85, and Cys70/Cys87.

Belongs to the long chain scorpion toxin family. Class 1 subfamily. Expressed by the venom gland.

It is found in the secreted. Functionally, inhibits voltage-gated potassium channel. This chain is Neurotoxin beta-KTx 31.1, found in Lychas mucronatus (Chinese swimming scorpion).